The following is a 248-amino-acid chain: Cutinase (248 aa).

An N-terminal signal peptide occupies residues 1–17 (MRSLAILTTLLAGHAFA). The propeptide occupies 18-28 (YPKPAPQSVNR). The tract at residues 31–70 (WPSINEFLSELAKVMPIGDTITAACDLISDGEDAAASLFG) is lid covering the active site of the uncomplexed enzyme. 2 cysteine pairs are disulfide-bonded: cysteine 55–cysteine 91 and cysteine 79–cysteine 153. Catalysis depends on serine 164, which acts as the Nucleophile. A disulfide bridge links cysteine 212 with cysteine 219. Aspartate 216 is a catalytic residue. Catalysis depends on histidine 229, which acts as the Proton donor/acceptor.

This sequence belongs to the cutinase family.

It localises to the secreted. The enzyme catalyses cutin + H2O = cutin monomers.. Weakly inhibited by n-undecyl phosphonate (C11Y4). Activity unaffected by paraoxon. In terms of biological role, catalyzes the hydrolysis of complex carboxylic polyesters found in the cell wall of plants. Degrades cutin, a macromolecule that forms the structure of the plant cuticle. The polypeptide is Cutinase (Hypocrea jecorina (strain QM6a) (Trichoderma reesei)).